A 135-amino-acid polypeptide reads, in one-letter code: Hexon-associated protein (135 aa).

Positions Arg1–Gly19 are excised as a propeptide.

The protein belongs to the adenoviridae pVIII family.

The polypeptide is Hexon-associated protein (PVIII) (Homo sapiens (Human)).